The chain runs to 131 residues: UPF0102 protein YraN (131 aa).

This sequence belongs to the UPF0102 family.

The sequence is that of UPF0102 protein YraN from Salmonella typhi.